The primary structure comprises 586 residues: Asparagine synthetase [glutamine-hydrolyzing] 2 (586 aa).

The For GATase activity role is filled by C2. A Glutamine amidotransferase type-2 domain is found at 2-185 (CGILAVLGCS…PGHLYSSKEK (184 aa)). Residues 50–54 (RLAIV), 75–77 (NGE), and D98 contribute to the L-glutamine site. Residues 193–516 (PPWFSEAIPS…PQNSARLSVP (324 aa)) enclose the Asparagine synthetase domain. Residues L231, V267, and 341 to 342 (SG) contribute to the ATP site.

The catalysed reaction is L-aspartate + L-glutamine + ATP + H2O = L-asparagine + L-glutamate + AMP + diphosphate + H(+). It functions in the pathway amino-acid biosynthesis; L-asparagine biosynthesis; L-asparagine from L-aspartate (L-Gln route): step 1/1. This Lotus japonicus (Lotus corniculatus var. japonicus) protein is Asparagine synthetase [glutamine-hydrolyzing] 2 (AS2).